Reading from the N-terminus, the 443-residue chain is Adenylyltransferase and sulfurtransferase UBA4 (443 aa).

Residues Gly-81, Asp-102, 109–113 (SNLHR), Lys-126, and 170–171 (DS) each bind ATP. Zn(2+) is bound by residues Cys-212 and Cys-215. Cys-229 (glycyl thioester intermediate; for adenylyltransferase activity) is an active-site residue. Zn(2+) contacts are provided by Cys-290 and Cys-293. The region spanning 342-441 (KERGFVCLDV…YIDEINPSLP (100 aa)) is the Rhodanese domain. Cys-400 serves as the catalytic Cysteine persulfide intermediate; for sulfurtransferase activity.

This sequence in the N-terminal section; belongs to the HesA/MoeB/ThiF family. UBA4 subfamily. It depends on Zn(2+) as a cofactor.

Its subcellular location is the cytoplasm. The protein localises to the cytosol. It functions in the pathway tRNA modification; 5-methoxycarbonylmethyl-2-thiouridine-tRNA biosynthesis. Plays a central role in 2-thiolation of mcm(5)S(2)U at tRNA wobble positions of cytosolic tRNA(Lys), tRNA(Glu) and tRNA(Gln). Acts by mediating the C-terminal thiocarboxylation of sulfur carrier URM1. Its N-terminus first activates URM1 as acyl-adenylate (-COAMP), then the persulfide sulfur on the catalytic cysteine is transferred to URM1 to form thiocarboxylation (-COSH) of its C-terminus. The reaction probably involves hydrogen sulfide that is generated from the persulfide intermediate and that acts as a nucleophile towards URM1. Subsequently, a transient disulfide bond is formed. Does not use thiosulfate as sulfur donor; NFS1 probably acting as a sulfur donor for thiocarboxylation reactions. Prior mcm(5) tRNA modification by the elongator complex is required for 2-thiolation. May also be involved in protein urmylation. This Eremothecium gossypii (strain ATCC 10895 / CBS 109.51 / FGSC 9923 / NRRL Y-1056) (Yeast) protein is Adenylyltransferase and sulfurtransferase UBA4.